The primary structure comprises 548 residues: Glucose-6-phosphate isomerase 1 (548 aa).

Glu-353 acts as the Proton donor in catalysis. Catalysis depends on residues His-384 and Lys-495.

Belongs to the GPI family.

It is found in the cytoplasm. The enzyme catalyses alpha-D-glucose 6-phosphate = beta-D-fructose 6-phosphate. It participates in carbohydrate biosynthesis; gluconeogenesis. The protein operates within carbohydrate degradation; glycolysis; D-glyceraldehyde 3-phosphate and glycerone phosphate from D-glucose: step 2/4. Functionally, catalyzes the reversible isomerization of glucose-6-phosphate to fructose-6-phosphate. The polypeptide is Glucose-6-phosphate isomerase 1 (Chromohalobacter salexigens (strain ATCC BAA-138 / DSM 3043 / CIP 106854 / NCIMB 13768 / 1H11)).